The following is a 461-amino-acid chain: Nicotianamine aminotransferase A (461 aa).

The segment at 1 to 29 is disordered; that stretch reads MVHQSNGHGEAAAAAANGKSNGHAAAANG. Residues 11–29 show a composition bias toward low complexity; sequence AAAAAANGKSNGHAAAANG. K289 is subject to N6-(pyridoxal phosphate)lysine.

This sequence belongs to the class-I pyridoxal-phosphate-dependent aminotransferase family. Pyridoxal 5'-phosphate is required as a cofactor. In terms of tissue distribution, expressed in roots, but not in leaves.

It catalyses the reaction nicotianamine + 2-oxoglutarate = 3''-deamino-3''-oxonicotianamine + L-glutamate. Involved in biosynthesis of mugineic acid family phytosiderophores. This Hordeum vulgare (Barley) protein is Nicotianamine aminotransferase A.